Consider the following 125-residue polypeptide: Large ribosomal subunit protein bL12 (125 aa).

The protein belongs to the bacterial ribosomal protein bL12 family. In terms of assembly, homodimer. Part of the ribosomal stalk of the 50S ribosomal subunit. Forms a multimeric L10(L12)X complex, where L10 forms an elongated spine to which 2 to 4 L12 dimers bind in a sequential fashion. Binds GTP-bound translation factors.

In terms of biological role, forms part of the ribosomal stalk which helps the ribosome interact with GTP-bound translation factors. Is thus essential for accurate translation. This chain is Large ribosomal subunit protein bL12, found in Rickettsia africae (strain ESF-5).